Here is a 220-residue protein sequence, read N- to C-terminus: LHFPL tetraspan subfamily member 1 protein (220 aa).

A signal peptide spans 1 to 20 (MRNSLTMVGTFWAFLSLVTA). Helical transmembrane passes span 86-106 (VVTGAGCALLLLVALAAVLGC) and 122-142 (AAQFVGGLLISAGCALYPLGW). Residue N153 is glycosylated (N-linked (GlcNAc...) asparagine). Residues 165–185 (LGWAYYCAGGGAAAAMLICTW) traverse the membrane as a helical segment.

It belongs to the LHFP family. Widely expressed. Strongly expressed in vagina and ovary. Weakly expressed in spleen, kidney, thymus, testis, brain, lung, intestine and uterus.

Its subcellular location is the membrane. This is LHFPL tetraspan subfamily member 1 protein from Mus musculus (Mouse).